A 362-amino-acid chain; its full sequence is Probable cinnamyl alcohol dehydrogenase 8D (362 aa).

Position 45 (Cys45) interacts with Zn(2+). Thr47 provides a ligand contact to NADP(+). Positions 67, 68, 98, 101, 104, 112, and 161 each coordinate Zn(2+). Residues Thr165, 186–191, 209–214, Thr249, Gly273, and 296–298 each bind NADP(+); these read GLGGLG, SSSPAK, and NGV.

Belongs to the zinc-containing alcohol dehydrogenase family. In terms of assembly, homodimer. Requires Zn(2+) as cofactor.

It carries out the reaction (E)-cinnamyl alcohol + NADP(+) = (E)-cinnamaldehyde + NADPH + H(+). The catalysed reaction is (E)-coniferol + NADP(+) = (E)-coniferaldehyde + NADPH + H(+). The enzyme catalyses (E)-sinapyl alcohol + NADP(+) = (E)-sinapaldehyde + NADPH + H(+). It catalyses the reaction (E)-4-coumaroyl alcohol + NADP(+) = (E)-4-coumaraldehyde + NADPH + H(+). It carries out the reaction (E)-caffeyl alcohol + NADP(+) = (E)-caffeyl aldehyde + NADPH + H(+). It functions in the pathway aromatic compound metabolism; phenylpropanoid biosynthesis. Functionally, involved in lignin biosynthesis. Catalyzes the final step specific for the production of lignin monomers. Catalyzes the NADPH-dependent reduction of coniferaldehyde, 5-hydroxyconiferaldehyde, sinapaldehyde, 4-coumaraldehyde and caffeyl aldehyde to their respective alcohols. The chain is Probable cinnamyl alcohol dehydrogenase 8D from Oryza sativa subsp. japonica (Rice).